Consider the following 723-residue polypeptide: Fatty acid oxidation complex subunit alpha (723 aa).

The enoyl-CoA hydratase/isomerase stretch occupies residues 1-189 (MIYQADTLQV…KIGLLDAVVE (189 aa)). Asp296 lines the substrate pocket. Residues 311–723 (SKDTERAAVL…FYGAQQQGSI (413 aa)) form a 3-hydroxyacyl-CoA dehydrogenase region. Residues Met325, Asp344, 401 to 403 (VVE), Lys408, and Ser430 each bind NAD(+). His451 serves as the catalytic For 3-hydroxyacyl-CoA dehydrogenase activity. An NAD(+)-binding site is contributed by Asn454. Substrate is bound by residues Asn501 and Tyr661.

In the N-terminal section; belongs to the enoyl-CoA hydratase/isomerase family. This sequence in the C-terminal section; belongs to the 3-hydroxyacyl-CoA dehydrogenase family. Heterotetramer of two alpha chains (FadB) and two beta chains (FadA).

It carries out the reaction a (3S)-3-hydroxyacyl-CoA + NAD(+) = a 3-oxoacyl-CoA + NADH + H(+). The catalysed reaction is a (3S)-3-hydroxyacyl-CoA = a (2E)-enoyl-CoA + H2O. The enzyme catalyses a 4-saturated-(3S)-3-hydroxyacyl-CoA = a (3E)-enoyl-CoA + H2O. It catalyses the reaction (3S)-3-hydroxybutanoyl-CoA = (3R)-3-hydroxybutanoyl-CoA. It carries out the reaction a (3Z)-enoyl-CoA = a 4-saturated (2E)-enoyl-CoA. The catalysed reaction is a (3E)-enoyl-CoA = a 4-saturated (2E)-enoyl-CoA. It functions in the pathway lipid metabolism; fatty acid beta-oxidation. In terms of biological role, involved in the aerobic and anaerobic degradation of long-chain fatty acids via beta-oxidation cycle. Catalyzes the formation of 3-oxoacyl-CoA from enoyl-CoA via L-3-hydroxyacyl-CoA. It can also use D-3-hydroxyacyl-CoA and cis-3-enoyl-CoA as substrate. The protein is Fatty acid oxidation complex subunit alpha of Vibrio parahaemolyticus serotype O3:K6 (strain RIMD 2210633).